The chain runs to 197 residues: U1 small nuclear ribonucleoprotein C (197 aa).

A Matrin-type zinc finger spans residues 4 to 36; that stretch reads YYCEYCDIYLTHSSPVGRRQHNQGRKHISAKIE. Over residues 128-137 the composition is skewed to low complexity; that stretch reads FHNNKRINNI. The tract at residues 128 to 178 is disordered; that stretch reads FHNNKRINNIPKPYNNYTNKPITNSSYKNDKQDYRNNNESNDNMNSNNFSN. Residues 142–154 are compositionally biased toward polar residues; that stretch reads NNYTNKPITNSSY. Residues 164–178 show a composition bias toward low complexity; that stretch reads NNESNDNMNSNNFSN.

Belongs to the U1 small nuclear ribonucleoprotein C family. As to quaternary structure, U1 snRNP is composed of the 7 core Sm proteins B/B', D1, D2, D3, E, F and G that assemble in a heptameric protein ring on the Sm site of the small nuclear RNA to form the core snRNP, and at least 3 U1 snRNP-specific proteins U1-70K, U1-A and U1-C. U1-C interacts with U1 snRNA and the 5' splice-site region of the pre-mRNA.

It localises to the nucleus. Component of the spliceosomal U1 snRNP, which is essential for recognition of the pre-mRNA 5' splice-site and the subsequent assembly of the spliceosome. U1-C is directly involved in initial 5' splice-site recognition for both constitutive and regulated alternative splicing. The interaction with the 5' splice-site seems to precede base-pairing between the pre-mRNA and the U1 snRNA. Stimulates commitment or early (E) complex formation by stabilizing the base pairing of the 5' end of the U1 snRNA and the 5' splice-site region. The protein is U1 small nuclear ribonucleoprotein C (SNRPC) of Plasmodium berghei (strain Anka).